Consider the following 159-residue polypeptide: 2-C-methyl-D-erythritol 2,4-cyclodiphosphate synthase (159 aa).

A divalent metal cation is bound by residues Asp10 and His12. 4-CDP-2-C-methyl-D-erythritol 2-phosphate is bound by residues 10–12 and 36–37; these read DVH and HS. Residue His44 participates in a divalent metal cation binding. 4-CDP-2-C-methyl-D-erythritol 2-phosphate contacts are provided by residues 58–60, 63–67, 102–108, 134–137, Phe141, and Arg144; these read DIG, FPDTD, AQVPKMA, and TTTE.

It belongs to the IspF family. In terms of assembly, homotrimer. The cofactor is a divalent metal cation.

It catalyses the reaction 4-CDP-2-C-methyl-D-erythritol 2-phosphate = 2-C-methyl-D-erythritol 2,4-cyclic diphosphate + CMP. Its pathway is isoprenoid biosynthesis; isopentenyl diphosphate biosynthesis via DXP pathway; isopentenyl diphosphate from 1-deoxy-D-xylulose 5-phosphate: step 4/6. Functionally, involved in the biosynthesis of isopentenyl diphosphate (IPP) and dimethylallyl diphosphate (DMAPP), two major building blocks of isoprenoid compounds. Catalyzes the conversion of 4-diphosphocytidyl-2-C-methyl-D-erythritol 2-phosphate (CDP-ME2P) to 2-C-methyl-D-erythritol 2,4-cyclodiphosphate (ME-CPP) with a corresponding release of cytidine 5-monophosphate (CMP). This Shewanella woodyi (strain ATCC 51908 / MS32) protein is 2-C-methyl-D-erythritol 2,4-cyclodiphosphate synthase.